The chain runs to 203 residues: Amelogenin, Y isoform (203 aa).

The N-terminal stretch at 1–16 (MGTWILFACLVGAAFA) is a signal peptide. Positions 116-180 (MPVPGQQSMT…PPLPPMFPMR (65 aa)) are disordered. Residues 120-130 (GQQSMTPTQHH) show a composition bias toward polar residues. Residues 131–142 (QPNLPLPAQQPF) are compositionally biased toward low complexity. A compositionally biased stretch (pro residues) spans 143-180 (QPQPVQPLPHQPMQPQPPVQPMQPLLPQPPLPPMFPMR).

This sequence belongs to the amelogenin family.

The protein resides in the secreted. Its subcellular location is the extracellular space. It is found in the extracellular matrix. Its function is as follows. Plays a role in biomineralization. Seems to regulate the formation of crystallites during the secretory stage of tooth enamel development. Thought to play a major role in the structural organization and mineralization of developing enamel. This chain is Amelogenin, Y isoform (AMELY), found in Pan troglodytes (Chimpanzee).